We begin with the raw amino-acid sequence, 596 residues long: Putative terpenoid synthase 5 (596 aa).

Asp-349, Asp-353, Asn-481, and Asp-489 together coordinate Mg(2+). Residues Asp-349–Asp-353 carry the DDXXD motif motif.

Belongs to the terpene synthase family. Tpsa subfamily. It depends on Mg(2+) as a cofactor. Mn(2+) serves as cofactor.

The protein resides in the cytoplasm. It participates in secondary metabolite biosynthesis; terpenoid biosynthesis. In Arabidopsis thaliana (Mouse-ear cress), this protein is Putative terpenoid synthase 5 (TPS05).